The following is a 720-amino-acid chain: Probable GTPase-activating protein GYL1 (720 aa).

Position 1 is an N-acetylmethionine (methionine 1). The span at 1 to 52 (MNSNEDIHEERIEVPRTPHQTQPEKDSDRIALRDEISVPEGDEKAYSDEKVE) shows a compositional bias: basic and acidic residues. The disordered stretch occupies residues 1-132 (MNSNEDIHEE…TSPPLPPRAD (132 aa)). Threonine 17 carries the phosphothreonine modification. Serine 37 is subject to Phosphoserine. Residues 54–66 (ATTNASSNFGSNE) are compositionally biased toward polar residues. At serine 73 the chain carries Phosphoserine. Polar residues predominate over residues 95 to 108 (SKTILPSDDLSQQL). Positions 111–120 (EESKVEEALK) are enriched in basic and acidic residues. A Phosphoserine modification is found at serine 139. Disordered stretches follow at residues 144 to 164 (SLPP…RPQL) and 179 to 210 (APHG…PRRI). The span at 184 to 196 (ATPSKSPTSAVGN) shows a compositional bias: polar residues. Residues 297–477 (GIPAAYRLVV…RIGDMVFLEG (181 aa)) form the Rab-GAP TBC domain. Lysine 498 is covalently cross-linked (Glycyl lysine isopeptide (Lys-Gly) (interchain with G-Cter in SUMO)). A coiled-coil region spans residues 572–696 (QYKSITEKNL…EIKTANKNGT (125 aa)).

This sequence belongs to the GYP5 family. In terms of assembly, interacts with GYP5 and RVS167. Is part of SEC4-containing complexes.

It is found in the cytoplasm. Its subcellular location is the bud. The protein localises to the bud neck. Probable GTPase-activating protein which stimulates the GTP hydrolysis rate by GYP5 of YPT1 and SEC4. Involved in ER to Golgi trafficking and polarized exocytosis. This Saccharomyces cerevisiae (strain ATCC 204508 / S288c) (Baker's yeast) protein is Probable GTPase-activating protein GYL1 (GYL1).